The following is a 285-amino-acid chain: Probable endonuclease 4 (285 aa).

Zn(2+)-binding residues include His69, His109, Glu145, Asp179, His182, His216, Asp229, His231, and Glu261.

This sequence belongs to the AP endonuclease 2 family. The cofactor is Zn(2+).

The enzyme catalyses Endonucleolytic cleavage to 5'-phosphooligonucleotide end-products.. In terms of biological role, endonuclease IV plays a role in DNA repair. It cleaves phosphodiester bonds at apurinic or apyrimidinic (AP) sites, generating a 3'-hydroxyl group and a 5'-terminal sugar phosphate. The protein is Probable endonuclease 4 of Yersinia pestis bv. Antiqua (strain Antiqua).